Consider the following 473-residue polypeptide: FAD-dependent urate hydroxylase (473 aa).

It belongs to the HpyO family. Homodimer. The cofactor is FAD.

It catalyses the reaction urate + NADH + O2 + H(+) = 5-hydroxyisourate + NAD(+) + H2O. The catalysed reaction is urate + NADPH + O2 + H(+) = 5-hydroxyisourate + NADP(+) + H2O. The protein operates within purine metabolism; urate degradation. Its function is as follows. Catalyzes the hydroxylation of urate to 5-hydroxyisourate (HIU). Is likely to be involved in the urate degradation pathway to allantoin. Is slightly more efficient (about 2.6 times) with NADPH than NADH as the electron donor. This chain is FAD-dependent urate hydroxylase, found in Xanthomonas campestris pv. campestris (strain ATCC 33913 / DSM 3586 / NCPPB 528 / LMG 568 / P 25).